An 890-amino-acid polypeptide reads, in one-letter code: Translation initiation factor IF-2 (890 aa).

The segment at Leu-45–Gln-304 is disordered. The segment covering Ser-67–Val-81 has biased composition (polar residues). Positions Val-92–Asp-217 are enriched in basic and acidic residues. Positions Gly-252–Asn-266 are enriched in basic residues. Residues Lys-267–Ala-280 show a composition bias toward basic and acidic residues. Residues Pro-389–Lys-558 enclose the tr-type G domain. Positions Gly-398–Thr-405 are G1. Gly-398–Thr-405 contacts GTP. A G2 region spans residues Gly-423–His-427. Residues Asp-444–Gly-447 are G3. GTP is bound by residues Asp-444 to His-448 and Asn-498 to Asp-501. A G4 region spans residues Asn-498–Asp-501. Residues Ser-534–Lys-536 form a G5 region. Residue Lys-808 is modified to N6-acetyllysine.

Belongs to the TRAFAC class translation factor GTPase superfamily. Classic translation factor GTPase family. IF-2 subfamily.

It localises to the cytoplasm. Its function is as follows. One of the essential components for the initiation of protein synthesis. Protects formylmethionyl-tRNA from spontaneous hydrolysis and promotes its binding to the 30S ribosomal subunits. Also involved in the hydrolysis of GTP during the formation of the 70S ribosomal complex. The polypeptide is Translation initiation factor IF-2 (Escherichia coli (strain 55989 / EAEC)).